The following is a 306-amino-acid chain: Palmitoyl-protein thioesterase 1 (306 aa).

An N-terminal signal peptide occupies residues 1 to 27 (MASSSCLWLLALAFLLGSCASLALGHL). 3 disulfide bridges follow: Cys45-Cys46, Cys96-Cys128, and Cys152-Cys160. Ser115 is a catalytic residue. Residues Asn197, Asn212, and Asn232 are each glycosylated (N-linked (GlcNAc...) asparagine). Catalysis depends on residues Asp233 and His289.

The protein belongs to the palmitoyl-protein thioesterase family. Interacts with CLN5, ATP5F1A and ATP5F1B. Glycosylated. Spleen, brain, seminal vesicle, and testis. Lower levels of activity in liver, heart, lung, and skeletal muscle.

Its subcellular location is the lysosome. The protein resides in the secreted. The protein localises to the golgi apparatus. It is found in the endoplasmic reticulum. It catalyses the reaction S-hexadecanoyl-L-cysteinyl-[protein] + H2O = L-cysteinyl-[protein] + hexadecanoate + H(+). The catalysed reaction is hexadecanoyl-CoA + H2O = hexadecanoate + CoA + H(+). It carries out the reaction S-hexadecanoyl-N-acetylcysteamine + H2O = N-acetylcysteamine + hexadecanoate + H(+). The enzyme catalyses S-hexadecanoyl-N-acetylcysteine methyl ester + H2O = N-acetylcysteine methyl ester + hexadecanoate + H(+). With respect to regulation, palmitoylation reduces PPT1 enzymatic activity. Functionally, has thioesterase activity against fatty acid thioesters with 14 -18 carbons, including palmitoyl-CoA, S-palmitoyl-N-acetylcysteamine, and palmitoylated proteins. In contrast to PPT2, PPT1 can hydrolyze palmitoylated proteins and palmitoylcysteine. The polypeptide is Palmitoyl-protein thioesterase 1 (PPT1) (Bos taurus (Bovine)).